Here is a 436-residue protein sequence, read N- to C-terminus: Histidinol dehydrogenase (436 aa).

Residues T240, Q262, and H265 each contribute to the substrate site. Residues Q262 and H265 each coordinate Zn(2+). Residues E331 and H332 each act as proton acceptor in the active site. Substrate is bound by residues H332, D365, E419, and H424. D365 contributes to the Zn(2+) binding site. H424 is a binding site for Zn(2+).

Belongs to the histidinol dehydrogenase family. Requires Zn(2+) as cofactor.

The catalysed reaction is L-histidinol + 2 NAD(+) + H2O = L-histidine + 2 NADH + 3 H(+). Its pathway is amino-acid biosynthesis; L-histidine biosynthesis; L-histidine from 5-phospho-alpha-D-ribose 1-diphosphate: step 9/9. In terms of biological role, catalyzes the sequential NAD-dependent oxidations of L-histidinol to L-histidinaldehyde and then to L-histidine. The sequence is that of Histidinol dehydrogenase from Leifsonia xyli subsp. xyli (strain CTCB07).